The primary structure comprises 488 residues: Glutamyl-tRNA(Gln) amidotransferase subunit A (488 aa).

Residues K77 and S152 each act as charge relay system in the active site. Residue S176 is the Acyl-ester intermediate of the active site.

The protein belongs to the amidase family. GatA subfamily. In terms of assembly, heterotrimer of A, B and C subunits.

It carries out the reaction L-glutamyl-tRNA(Gln) + L-glutamine + ATP + H2O = L-glutaminyl-tRNA(Gln) + L-glutamate + ADP + phosphate + H(+). In terms of biological role, allows the formation of correctly charged Gln-tRNA(Gln) through the transamidation of misacylated Glu-tRNA(Gln) in organisms which lack glutaminyl-tRNA synthetase. The reaction takes place in the presence of glutamine and ATP through an activated gamma-phospho-Glu-tRNA(Gln). The protein is Glutamyl-tRNA(Gln) amidotransferase subunit A of Streptococcus equi subsp. zooepidemicus (strain MGCS10565).